A 606-amino-acid chain; its full sequence is Calmegin (606 aa).

An N-terminal signal peptide occupies residues 1–19; it reads MRFQGFWLCLGLLFISVNA. Over 20–466 the chain is Lumenal; that stretch reads EFMDDSVEME…QLMSATEQRP (447 aa). The residue at position 124 (Lys-124) is an N6-acetyllysine. A disulfide bridge links Cys-147 with Cys-181. A disordered region spans residues 255–308; sequence PPINPPKEIEDPTDEKPDDWDERAKIPDASAVKPEDWDESEPPQIVDSSAVKPD. 8 tandem repeats follow at residues 263–276, 280–293, 299–312, 318–331, 335–348, 352–365, 366–379, and 380–393. Positions 265–275 are enriched in acidic residues; it reads DPTDEKPDDWD. Positions 313–346 are interaction with PPIB; it reads NEPEFIPDPNAEKPFDWNEDMDGEWEAPHISNPA. Cys-347 and Cys-351 form a disulfide bridge. A helical membrane pass occupies residues 467–487; the sequence is WLWFIYLLTAALPIALIGSFC. Topologically, residues 488–606 are cytoplasmic; it reads WPRKVKKKYE…SVRKRRVRKE (119 aa). Over residues 518–544 the composition is skewed to basic and acidic residues; the sequence is EVKEEKAALEKPVDLEEEKKQSDGEIV. Positions 518–606 are disordered; the sequence is EVKEEKAALE…SVRKRRVRKE (89 aa). The segment covering 545-567 has biased composition (acidic residues); that stretch reads EKEEEGEPEEKSEEEIEIIEGQE. Ser-556, Ser-572, Ser-575, Ser-577, Ser-587, Ser-590, and Ser-597 each carry phosphoserine. Basic and acidic residues predominate over residues 568–579; the sequence is EGNKSNKSGSED. The span at 597-606 shows a compositional bias: basic residues; it reads SVRKRRVRKE.

The protein belongs to the calreticulin family. Interacts with PPIB and PDILT. Interacts with ADAM2.

It localises to the endoplasmic reticulum membrane. Functionally, functions during spermatogenesis as a chaperone for a range of client proteins that are important for sperm adhesion onto the egg zona pellucida and for subsequent penetration of the zona pellucida. Required for normal sperm migration from the uterus into the oviduct. Required for normal male fertility. Binds calcium ions. The polypeptide is Calmegin (CLGN) (Bos taurus (Bovine)).